The chain runs to 134 residues: Profilin-2 (134 aa).

A Phosphothreonine modification is found at threonine 114.

It belongs to the profilin family. In terms of assembly, occurs in many kinds of cells as a complex with monomeric actin in a 1:1 ratio. Phosphorylated by MAP kinases.

It is found in the cytoplasm. The protein resides in the cytoskeleton. In terms of biological role, binds to actin and affects the structure of the cytoskeleton. At high concentrations, profilin prevents the polymerization of actin, whereas it enhances it at low concentrations. By binding to PIP2, it inhibits the formation of IP3 and DG. The sequence is that of Profilin-2 (PRO2) from Nicotiana tabacum (Common tobacco).